Reading from the N-terminus, the 259-residue chain is Deoxyribose-phosphate aldolase (259 aa).

The Proton donor/acceptor role is filled by aspartate 102. Residue lysine 167 is the Schiff-base intermediate with acetaldehyde of the active site. Lysine 201 (proton donor/acceptor) is an active-site residue.

Belongs to the DeoC/FbaB aldolase family. DeoC type 2 subfamily.

Its subcellular location is the cytoplasm. It carries out the reaction 2-deoxy-D-ribose 5-phosphate = D-glyceraldehyde 3-phosphate + acetaldehyde. It functions in the pathway carbohydrate degradation; 2-deoxy-D-ribose 1-phosphate degradation; D-glyceraldehyde 3-phosphate and acetaldehyde from 2-deoxy-alpha-D-ribose 1-phosphate: step 2/2. Catalyzes a reversible aldol reaction between acetaldehyde and D-glyceraldehyde 3-phosphate to generate 2-deoxy-D-ribose 5-phosphate. The polypeptide is Deoxyribose-phosphate aldolase (Escherichia coli (strain SMS-3-5 / SECEC)).